A 525-amino-acid chain; its full sequence is Bifunctional purine biosynthesis protein PurH (525 aa).

Residues 1–148 form the MGS-like domain; the sequence is MPSNNLIKNA…KNYKNVIVIV (148 aa).

The protein belongs to the PurH family.

It carries out the reaction (6R)-10-formyltetrahydrofolate + 5-amino-1-(5-phospho-beta-D-ribosyl)imidazole-4-carboxamide = 5-formamido-1-(5-phospho-D-ribosyl)imidazole-4-carboxamide + (6S)-5,6,7,8-tetrahydrofolate. The catalysed reaction is IMP + H2O = 5-formamido-1-(5-phospho-D-ribosyl)imidazole-4-carboxamide. The protein operates within purine metabolism; IMP biosynthesis via de novo pathway; 5-formamido-1-(5-phospho-D-ribosyl)imidazole-4-carboxamide from 5-amino-1-(5-phospho-D-ribosyl)imidazole-4-carboxamide (10-formyl THF route): step 1/1. Its pathway is purine metabolism; IMP biosynthesis via de novo pathway; IMP from 5-formamido-1-(5-phospho-D-ribosyl)imidazole-4-carboxamide: step 1/1. In Buchnera aphidicola subsp. Acyrthosiphon pisum (strain APS) (Acyrthosiphon pisum symbiotic bacterium), this protein is Bifunctional purine biosynthesis protein PurH.